The following is a 308-amino-acid chain: MRKLVVGSRRSKLALTQSQQFIDKLKAVEPNLEIEIKEIVTKGDRIVDKQLSKVGGKGLFVKEIQHELFEKNIDMAIHSLKDVPSVIPEGLTLGCIPDRELPFDAYISKTHTPLSQLPEGSIIGTSSLRRGAQILSKYPNLEIKWIRGNIDTRLEKLQTEDYDAIILAAAGLRRMGWSDDIVTSYLDRDTLLPAIGQGALGIECRSDDEELLTLLSKVHNDEVAKCVTAERTFLAEMDGSCQVPIAGYATISDQNEIEFTGLIMTPDGKERFEYTMNGTDPVELGKTVSNKLKEQGAYEIIKRLNEQH.

Cys241 bears the S-(dipyrrolylmethanemethyl)cysteine mark.

Belongs to the HMBS family. In terms of assembly, monomer. Dipyrromethane serves as cofactor.

It catalyses the reaction 4 porphobilinogen + H2O = hydroxymethylbilane + 4 NH4(+). It participates in porphyrin-containing compound metabolism; protoporphyrin-IX biosynthesis; coproporphyrinogen-III from 5-aminolevulinate: step 2/4. Functionally, tetrapolymerization of the monopyrrole PBG into the hydroxymethylbilane pre-uroporphyrinogen in several discrete steps. This Staphylococcus aureus (strain Newman) protein is Porphobilinogen deaminase.